We begin with the raw amino-acid sequence, 287 residues long: MSDNLKIGLQYLTPKHALTRLAGKLASAKMGWLTTAVIKWFIKQYNVEMSEAKNPDPEAYSTFNNFFVRELEDGARPINDDENVISHPADACVSQFGPITDGQLVQAKGHVYSAQELLGGDAELAEEFIGGEFATLYLSPRDYHRVHMPCDATLRKMVYVPGDLFSVNPLTAENVPNLFARNERVVCIFDTEFGPMAQVLVGATIVGSIETTWADTVTPPTGPAVKTWHYPLSGDDVICFKKGEEMGRFKLGSTVINLFAPNSITFDESMKNGVPTRLGTPFAHIAK.

Active-site charge relay system; for autoendoproteolytic cleavage activity residues include Asp-90, His-147, and Ser-253. Residue Ser-253 is the Schiff-base intermediate with substrate; via pyruvic acid; for decarboxylase activity of the active site. Ser-253 is modified (pyruvic acid (Ser); by autocatalysis).

The protein belongs to the phosphatidylserine decarboxylase family. PSD-B subfamily. Prokaryotic type I sub-subfamily. Heterodimer of a large membrane-associated beta subunit and a small pyruvoyl-containing alpha subunit. Pyruvate is required as a cofactor. Is synthesized initially as an inactive proenzyme. Formation of the active enzyme involves a self-maturation process in which the active site pyruvoyl group is generated from an internal serine residue via an autocatalytic post-translational modification. Two non-identical subunits are generated from the proenzyme in this reaction, and the pyruvate is formed at the N-terminus of the alpha chain, which is derived from the carboxyl end of the proenzyme. The autoendoproteolytic cleavage occurs by a canonical serine protease mechanism, in which the side chain hydroxyl group of the serine supplies its oxygen atom to form the C-terminus of the beta chain, while the remainder of the serine residue undergoes an oxidative deamination to produce ammonia and the pyruvoyl prosthetic group on the alpha chain. During this reaction, the Ser that is part of the protease active site of the proenzyme becomes the pyruvoyl prosthetic group, which constitutes an essential element of the active site of the mature decarboxylase.

The protein resides in the cell membrane. The enzyme catalyses a 1,2-diacyl-sn-glycero-3-phospho-L-serine + H(+) = a 1,2-diacyl-sn-glycero-3-phosphoethanolamine + CO2. Its pathway is phospholipid metabolism; phosphatidylethanolamine biosynthesis; phosphatidylethanolamine from CDP-diacylglycerol: step 2/2. Catalyzes the formation of phosphatidylethanolamine (PtdEtn) from phosphatidylserine (PtdSer). This is Phosphatidylserine decarboxylase proenzyme from Aliivibrio salmonicida (strain LFI1238) (Vibrio salmonicida (strain LFI1238)).